Here is a 147-residue protein sequence, read N- to C-terminus: Acidic phospholipase A2 beta-bungarotoxin A4 chain (147 aa).

The N-terminal stretch at 1–19 (MNPAHLLVLSAVCVSLLGA) is a signal peptide. A propeptide spanning residues 20 to 27 (ANIPPQHL) is cleaved from the precursor. Disulfide bonds link cysteine 54–cysteine 146, cysteine 56–cysteine 72, cysteine 71–cysteine 127, cysteine 78–cysteine 120, cysteine 88–cysteine 113, and cysteine 106–cysteine 118. Residues tyrosine 55, glycine 57, and glycine 59 each contribute to the Ca(2+) site. Histidine 75 is an active-site residue. A Ca(2+)-binding site is contributed by aspartate 76. Aspartate 121 is an active-site residue.

It belongs to the phospholipase A2 family. Group I subfamily. D49 sub-subfamily. As to quaternary structure, heterodimer; disulfide-linked. The A chains have phospholipase A2 activity and the B chains show homology with the basic protease inhibitors. It depends on Ca(2+) as a cofactor. In terms of tissue distribution, expressed by the venom gland.

It localises to the secreted. The enzyme catalyses a 1,2-diacyl-sn-glycero-3-phosphocholine + H2O = a 1-acyl-sn-glycero-3-phosphocholine + a fatty acid + H(+). Functionally, snake venom phospholipase A2 (PLA2) that inhibits neuromuscular transmission by blocking acetylcholine release from the nerve termini. PLA2 catalyzes the calcium-dependent hydrolysis of the 2-acyl groups in 3-sn-phosphoglycerides. The sequence is that of Acidic phospholipase A2 beta-bungarotoxin A4 chain from Bungarus multicinctus (Many-banded krait).